A 20-amino-acid polypeptide reads, in one-letter code: Agglutinin beta-2 chain (20 aa).

Residues G1 to N20 are disordered.

The protein belongs to the jacalin lectin family. As to quaternary structure, formed of four alpha chains and four beta chains.

D-galactose-specific lectin, binds the T-antigen structure Gal-beta1,3-GalNAc. This is Agglutinin beta-2 chain from Maclura pomifera (Osage orange).